Here is a 188-residue protein sequence, read N- to C-terminus: Putative manganese efflux pump MntP (188 aa).

A run of 6 helical transmembrane segments spans residues methionine 3–glycine 23, leucine 39–leucine 59, isoleucine 65–isoleucine 85, glycine 104–serine 124, leucine 125–valine 145, and isoleucine 167–glycine 187.

The protein belongs to the MntP (TC 9.B.29) family.

The protein resides in the cell inner membrane. In terms of biological role, probably functions as a manganese efflux pump. This is Putative manganese efflux pump MntP from Syntrophotalea carbinolica (strain DSM 2380 / NBRC 103641 / GraBd1) (Pelobacter carbinolicus).